Reading from the N-terminus, the 299-residue chain is Cytidine deaminase (299 aa).

2 consecutive CMP/dCMP-type deaminase domains span residues 56 to 176 (SKIE…FGPK) and 194 to 299 (LQGD…YIAV). A substrate-binding site is contributed by 97-99 (NQE). His-110 contributes to the Zn(2+) binding site. Glu-112 acts as the Proton donor in catalysis. Positions 137 and 140 each coordinate Zn(2+).

It belongs to the cytidine and deoxycytidylate deaminase family. Homodimer. Zn(2+) serves as cofactor.

The catalysed reaction is cytidine + H2O + H(+) = uridine + NH4(+). It catalyses the reaction 2'-deoxycytidine + H2O + H(+) = 2'-deoxyuridine + NH4(+). Functionally, this enzyme scavenges exogenous and endogenous cytidine and 2'-deoxycytidine for UMP synthesis. The chain is Cytidine deaminase from Haemophilus ducreyi (strain 35000HP / ATCC 700724).